The primary structure comprises 194 residues: Factor in the germline alpha (194 aa).

A bHLH domain is found at 59 to 111; it reads ERRRVANAKERERIKNLNRGFAKLKALVPFLPQSRKPSKVDILKGATEYIQIL. The segment covering 121-137 has biased composition (basic and acidic residues); it reads SEKQSPEEQTHSGRPSD. A disordered region spans residues 121–163; it reads SEKQSPEEQTHSGRPSDPHVSSTRELLGNATQPTSCASGLKKE. Over residues 139–157 the composition is skewed to polar residues; the sequence is HVSSTRELLGNATQPTSCA.

Heterodimer with TCF3/isoform E12. Expressed only in the oocytes within the ovary and at lower level in the testis. Found in the resting oocytes of the primordial follicle cells, at the periphery of the ovary and in the hilar region. Also detected in growing oocytes, but at lower levels.

The protein localises to the nucleus. Functionally, germ-line specific transcription factor implicated in postnatal oocyte-specific gene expression. Plays a key regulatory role in the expression of multiple oocyte-specific genes, including those that initiate folliculogenesis and those that encode the zona pellucida (ZP1, ZP2 and ZP3) required for fertilization and early embryonic survival. Essential for oocytes to survive and form primordial follicles. The persistence of FIGLA in adult females suggests that it may regulate additional pathways that are essential for normal ovarian development. Binds to the E-box (5'-CANNTG-3') of the ZPs (ZP1, ZP2, ZP3) promoters. This Mus musculus (Mouse) protein is Factor in the germline alpha (Figla).